We begin with the raw amino-acid sequence, 1049 residues long: Tegument protein pp150 (1049 aa).

Disordered stretches follow at residues 397-549 (EERQ…DPRF) and 659-945 (PFRM…YPAV). Residues 428–439 (ADEDDDDDDDDE) show a composition bias toward acidic residues. Gly residues predominate over residues 452-462 (SGKGAASGGGV). The segment covering 463–474 (SSIFSGLLSSGS) has biased composition (low complexity). Over residues 475–490 (QKPTSGPLNIPQQQQR) the composition is skewed to polar residues. The span at 509–525 (VRRDSAWDVRPLTETRG) shows a compositional bias: basic and acidic residues. Residues 672–688 (TVSTTPRRPSTPRAAVT) are compositionally biased toward low complexity. The segment covering 710–722 (PVEDSEEEDDDSS) has biased composition (acidic residues). Residues 731-743 (GHTTPSSDYNNDV) show a composition bias toward polar residues. Residues 745-757 (SPPSQTPEQSTPS) are compositionally biased toward low complexity. 3 stretches are compositionally biased toward polar residues: residues 766-776 (SPMTTTSTSQK), 791-800 (RAQTVTSTPV), and 808-835 (VSGTPSTVPATLLQPQPASSKTTSSRNV). Low complexity-rich tracts occupy residues 836–855 (TSGAGTSSASSARQPSASAS), 866–884 (SPATSPLSMLSSASPSPAK), 912–928 (VVGRPPSVPVSGSAPGR), and 936–945 (ASTTPTYPAV). Serine 922 is a glycosylation site (O-linked (GlcNAc) serine; by host). O-linked (GlcNAc) serine; by host glycosylation is present at serine 953. The tract at residues 1006–1032 (DLSSPQKSGTGPQPGSAGMGGAKTPSD) is disordered. Polar residues predominate over residues 1008-1018 (SSPQKSGTGPQ).

This sequence belongs to the herpesviridae large structural phosphoprotein family. In terms of assembly, interacts with host BICD1 and RAB6A. Interacts with small capsid protein UL48A; this interaction links together the capsid and pp150. Interacts with host CCNA2. Post-translationally, phosphorylated by host CCNA2.

It localises to the virion tegument. The protein localises to the host cytoplasm. Its subcellular location is the host nucleus. Participates in the last steps of viral maturation and release. Associates with nuclear capsids prior to DNA encapsidation and later preserves the integrity of nucleocapsids through secondary envelopment at the assembly compartment. Interacts with host CCNA2 and thereby blocks the onset of lytic gene expression to promote establishment of a quiescent state of infection in undifferentiated cells. This is Tegument protein pp150 (UL32) from Homo sapiens (Human).